A 51-amino-acid chain; its full sequence is Insulin (51 aa).

Intrachain disulfides connect Cys7-Cys37, Cys19-Cys50, and Cys36-Cys41.

It belongs to the insulin family. In terms of assembly, heterodimer of a B chain and an A chain linked by two disulfide bonds.

It is found in the secreted. Functionally, insulin decreases blood glucose concentration. It increases cell permeability to monosaccharides, amino acids and fatty acids. It accelerates glycolysis, the pentose phosphate cycle, and glycogen synthesis in liver. The sequence is that of Insulin (INS) from Balaenoptera borealis (Sei whale).